Here is a 225-residue protein sequence, read N- to C-terminus: MGFFITFEGIEGCGKTTQLRLLKERLVALGEKVTVTREPGGCPVADQMRAILLDAKNSAITPLAELLLYAAARAQHVQEVIVPALERGETVLCDRFTDATVAYQGHGRGLDLSVIEELNTLATGRVQPALTVLIDCPVEVGLSRALARIEATSGAKEERFERESLLFHQKVRDGYLALAAAFPERFVVVDGSGDVQQTGLLVEEALRRRMQSLGKAGLTEVKAGC.

ATP is bound at residue 9-16; it reads GIEGCGKT.

It belongs to the thymidylate kinase family.

The catalysed reaction is dTMP + ATP = dTDP + ADP. Phosphorylation of dTMP to form dTDP in both de novo and salvage pathways of dTTP synthesis. This is Thymidylate kinase from Geobacter sp. (strain M21).